The chain runs to 148 residues: uncharacterized protein (148 aa).

The N-terminal stretch at 1-35 is a signal peptide; that stretch reads MRCVTRTRNWWRRAARMPRAGSSAWWVAVCKQVCT.

It is found in the secreted. This is an uncharacterized protein from Homo sapiens (Human).